We begin with the raw amino-acid sequence, 314 residues long: tRNA dimethylallyltransferase 2 (314 aa).

8 to 15 (GPTGSGKS) contacts ATP. 10-15 (TGSGKS) is a substrate binding site.

Belongs to the IPP transferase family. Monomer. Requires Mg(2+) as cofactor.

It carries out the reaction adenosine(37) in tRNA + dimethylallyl diphosphate = N(6)-dimethylallyladenosine(37) in tRNA + diphosphate. In terms of biological role, catalyzes the transfer of a dimethylallyl group onto the adenine at position 37 in tRNAs that read codons beginning with uridine, leading to the formation of N6-(dimethylallyl)adenosine (i(6)A). The polypeptide is tRNA dimethylallyltransferase 2 (Mycobacterium marinum (strain ATCC BAA-535 / M)).